Reading from the N-terminus, the 717-residue chain is Asp/Glu-specific dipeptidyl-peptidase (717 aa).

Residues 1 to 21 form the signal peptide; that stretch reads MNKRFFPTLLLAFVCSTLAYA. Residues His-85, Asp-226, and Ser-652 each act as charge relay system in the active site.

The protein belongs to the peptidase S46 family.

The protein localises to the secreted. It is found in the cell surface. With respect to regulation, enzyme activity is completely blocked by diisopropyl-fluorophosphates, moderately by phenylmethylsulfonyl fluoride (PMSF) and 4-(2-methyl)benzenesulfonyl fluoride, and slightly by pepstatin in vitro. Functionally, catalyzes the removal of dipeptides from the N-terminus of oligopeptides. Shows a strict specificity for acidic residues (Asp or Glu) in the P1 position, and has a hydrophobic residue preference at the P2 position. Is likely involved in amino acid metabolism and bacterial growth/survival of asaccharolytic P.endodontalis, that utilizes amino acids from extracellular proteinaceous nutrients as energy and carbon sources. The sequence is that of Asp/Glu-specific dipeptidyl-peptidase (dpp11) from Porphyromonas endodontalis (strain ATCC 35406 / DSM 24491 / JCM 8526 / CCUG 16442 / BCRC 14492 / NCTC 13058 / HG 370) (Bacteroides endodontalis).